The chain runs to 95 residues: Aspartyl/glutamyl-tRNA(Asn/Gln) amidotransferase subunit C (95 aa).

Belongs to the GatC family. Heterotrimer of A, B and C subunits.

The catalysed reaction is L-glutamyl-tRNA(Gln) + L-glutamine + ATP + H2O = L-glutaminyl-tRNA(Gln) + L-glutamate + ADP + phosphate + H(+). It carries out the reaction L-aspartyl-tRNA(Asn) + L-glutamine + ATP + H2O = L-asparaginyl-tRNA(Asn) + L-glutamate + ADP + phosphate + 2 H(+). Its function is as follows. Allows the formation of correctly charged Asn-tRNA(Asn) or Gln-tRNA(Gln) through the transamidation of misacylated Asp-tRNA(Asn) or Glu-tRNA(Gln) in organisms which lack either or both of asparaginyl-tRNA or glutaminyl-tRNA synthetases. The reaction takes place in the presence of glutamine and ATP through an activated phospho-Asp-tRNA(Asn) or phospho-Glu-tRNA(Gln). The chain is Aspartyl/glutamyl-tRNA(Asn/Gln) amidotransferase subunit C from Methylobacterium radiotolerans (strain ATCC 27329 / DSM 1819 / JCM 2831 / NBRC 15690 / NCIMB 10815 / 0-1).